The following is a 933-amino-acid chain: Valine--tRNA ligase (933 aa).

Residues 1-24 (MIERVKTTKLSEASGLPKTYDPVG) form a disordered region. The 'HIGH' region motif lies at 57–67 (PNVTGSLHMGH). The short motif at 557 to 561 (KMSKS) is the 'KMSKS' region element. An ATP-binding site is contributed by Lys-560. Residues 866–932 (LIDIASLRSR…RLVKERLMGL (67 aa)) are a coiled coil.

Belongs to the class-I aminoacyl-tRNA synthetase family. ValS type 1 subfamily. Monomer.

Its subcellular location is the cytoplasm. It carries out the reaction tRNA(Val) + L-valine + ATP = L-valyl-tRNA(Val) + AMP + diphosphate. Its function is as follows. Catalyzes the attachment of valine to tRNA(Val). As ValRS can inadvertently accommodate and process structurally similar amino acids such as threonine, to avoid such errors, it has a 'posttransfer' editing activity that hydrolyzes mischarged Thr-tRNA(Val) in a tRNA-dependent manner. The chain is Valine--tRNA ligase from Prochlorococcus marinus (strain NATL2A).